The sequence spans 449 residues: tRNA-2-methylthio-N(6)-dimethylallyladenosine synthase (449 aa).

The region spanning 4–119 is the MTTase N-terminal domain; the sequence is RTFHIETFGC…APQALDRLVE (116 aa). [4Fe-4S] cluster is bound by residues cysteine 13, cysteine 48, cysteine 82, cysteine 158, cysteine 162, and cysteine 165. Residues 144–375 enclose the Radical SAM core domain; sequence GAVPASVFVN…QTLQNRLTER (232 aa). In terms of domain architecture, TRAM spans 378-446; sequence QDMVGRKVEV…KHSLLAEQAG (69 aa).

The protein belongs to the methylthiotransferase family. MiaB subfamily. In terms of assembly, monomer. [4Fe-4S] cluster is required as a cofactor.

The protein localises to the cytoplasm. It catalyses the reaction N(6)-dimethylallyladenosine(37) in tRNA + (sulfur carrier)-SH + AH2 + 2 S-adenosyl-L-methionine = 2-methylsulfanyl-N(6)-dimethylallyladenosine(37) in tRNA + (sulfur carrier)-H + 5'-deoxyadenosine + L-methionine + A + S-adenosyl-L-homocysteine + 2 H(+). Catalyzes the methylthiolation of N6-(dimethylallyl)adenosine (i(6)A), leading to the formation of 2-methylthio-N6-(dimethylallyl)adenosine (ms(2)i(6)A) at position 37 in tRNAs that read codons beginning with uridine. This is tRNA-2-methylthio-N(6)-dimethylallyladenosine synthase from Nitratidesulfovibrio vulgaris (strain ATCC 29579 / DSM 644 / CCUG 34227 / NCIMB 8303 / VKM B-1760 / Hildenborough) (Desulfovibrio vulgaris).